The sequence spans 177 residues: Large ribosomal subunit protein uL6 (177 aa).

This sequence belongs to the universal ribosomal protein uL6 family. As to quaternary structure, part of the 50S ribosomal subunit.

Its function is as follows. This protein binds to the 23S rRNA, and is important in its secondary structure. It is located near the subunit interface in the base of the L7/L12 stalk, and near the tRNA binding site of the peptidyltransferase center. In Serratia proteamaculans (strain 568), this protein is Large ribosomal subunit protein uL6.